The chain runs to 308 residues: Mycothiol acetyltransferase (308 aa).

N-acetyltransferase domains lie at 16–152 (ETLA…RPLA) and 165–308 (VTVR…RTES). Glu47 lines the 1D-myo-inositol 2-(L-cysteinylamino)-2-deoxy-alpha-D-glucopyranoside pocket. 91-93 (LVV) serves as a coordination point for acetyl-CoA. 1D-myo-inositol 2-(L-cysteinylamino)-2-deoxy-alpha-D-glucopyranoside-binding residues include Glu192, Lys231, and Glu240. Acetyl-CoA contacts are provided by residues 244–246 (LGV) and 251–257 (QGGGLGK). Residue Tyr278 participates in 1D-myo-inositol 2-(L-cysteinylamino)-2-deoxy-alpha-D-glucopyranoside binding.

Belongs to the acetyltransferase family. MshD subfamily. In terms of assembly, monomer.

It catalyses the reaction 1D-myo-inositol 2-(L-cysteinylamino)-2-deoxy-alpha-D-glucopyranoside + acetyl-CoA = mycothiol + CoA + H(+). Its function is as follows. Catalyzes the transfer of acetyl from acetyl-CoA to desacetylmycothiol (Cys-GlcN-Ins) to form mycothiol. This chain is Mycothiol acetyltransferase, found in Streptomyces avermitilis (strain ATCC 31267 / DSM 46492 / JCM 5070 / NBRC 14893 / NCIMB 12804 / NRRL 8165 / MA-4680).